The following is a 487-amino-acid chain: Cobyric acid synthase (487 aa).

Residues 251–439 (KLKVVAPAYP…CHGVLDHPEA (189 aa)) form the GATase cobBQ-type domain. Catalysis depends on C332, which acts as the Nucleophile. Residue H431 is part of the active site.

The protein belongs to the CobB/CobQ family. CobQ subfamily.

It functions in the pathway cofactor biosynthesis; adenosylcobalamin biosynthesis. Functionally, catalyzes amidations at positions B, D, E, and G on adenosylcobyrinic A,C-diamide. NH(2) groups are provided by glutamine, and one molecule of ATP is hydrogenolyzed for each amidation. This is Cobyric acid synthase from Dechloromonas aromatica (strain RCB).